Here is a 459-residue protein sequence, read N- to C-terminus: U-box domain-containing protein 75 (459 aa).

The U-box domain maps to 64–138; the sequence is AVPAVFICPI…AAWFSRRYTR (75 aa). ARM repeat units lie at residues 188 to 229 and 231 to 270; these read QSVT…GVPL and ADAK…ILME.

Interacts with GPA1. As to expression, expressed highly in panicles at flowering time, at moderate levels in vegetative shoot apices, leaf sheaths, leaf blades, and elongating internodes, and at low levels in roots.

Its subcellular location is the cell membrane. The enzyme catalyses S-ubiquitinyl-[E2 ubiquitin-conjugating enzyme]-L-cysteine + [acceptor protein]-L-lysine = [E2 ubiquitin-conjugating enzyme]-L-cysteine + N(6)-ubiquitinyl-[acceptor protein]-L-lysine.. The protein operates within protein modification; protein ubiquitination. In terms of biological role, E3 ubiquitin ligase that may function as positive regulator of brassinosteroid (BR) signaling. Possesses E3 ubiquitin ligase in vitro. Acts together with the heterotrimeric G alpha subunit GPA1 at the plasma membrane to mediate a BR signaling pathway that affects plant growth and development. Does not seem to be involved in gibberellin or cytokinin responses. This is U-box domain-containing protein 75 from Oryza sativa subsp. japonica (Rice).